Reading from the N-terminus, the 577-residue chain is Galectin-3-binding protein (577 aa).

Positions 1-18 (MALLWLLSVFLLVPGTQG) are cleaved as a signal peptide. One can recognise an SRCR domain in the interval 24 to 124 (MRLVNGASAN…HEKDAGVVCS (101 aa)). Intrachain disulfides connect Cys49–Cys113, Cys62–Cys123, and Cys93–Cys103. N-linked (GlcNAc...) asparagine glycosylation occurs at Asn69. An N-linked (GlcNAc...) asparagine glycan is attached at Asn125. One can recognise a BTB domain in the interval 153–221 (CDLFIQVTGQ…FYSRRIEVSM (69 aa)). The 101-residue stretch at 260 to 360 (PLDLYAYARA…MLPQELFELQ (101 aa)) folds into the BACK domain. N-linked (GlcNAc...) asparagine glycosylation is found at Asn362, Asn398, Asn543, and Asn572.

Homodimers and homomultimers. The multimers form ring-like structures with a diameter of 30-40 nm. Binds LGALS1 and LGALS3. Binds ITGB1, COL4A1, COL5A1, COL6A1, FN1 and NID. Interacts with PPIC (in vitro). The unglycosylated form interacts with PDE4DIP isoform 2/MMG8/SMYLE; this interaction may connect a pericentrosomal complex to the gamma-tubulin ring complex (gamma-TuRC) to promote microtubule assembly and acetylation. Post-translationally, N-glycosylated. As to expression, detected in embryo, liver, spleen, kidney, lung, heart, intestine, thymus and lymph node.

It is found in the secreted. The protein localises to the extracellular space. The protein resides in the extracellular matrix. Functionally, promotes integrin-mediated cell adhesion. May stimulate host defense against viruses and tumor cells. This Mus musculus (Mouse) protein is Galectin-3-binding protein (Lgals3bp).